The primary structure comprises 508 residues: T-complex protein 1 subunit beta (508 aa).

It belongs to the TCP-1 chaperonin family. As to quaternary structure, component of the T-complex protein 1 (TCP1) complex.

It localises to the cytoplasm. Molecular chaperone; assists the folding of proteins upon ATP hydrolysis. The protein is T-complex protein 1 subunit beta (CCT2) of Encephalitozoon cuniculi (strain GB-M1) (Microsporidian parasite).